The chain runs to 1107 residues: Unconventional myosin-Ib (1107 aa).

The 687-residue stretch at 15–701 folds into the Myosin motor domain; it reads IGVGDMVLLE…TLFQLEDLRK (687 aa). At serine 60 the chain carries Phosphoserine. 108–115 is an ATP binding site; the sequence is GESGAGKT. Lysine 287 participates in a covalent cross-link: Glycyl lysine isopeptide (Lys-Gly) (interchain with G-Cter in SUMO1); alternate. Residue lysine 287 forms a Glycyl lysine isopeptide (Lys-Gly) (interchain with G-Cter in SUMO2); alternate linkage. Residues 592 to 599 form an actin-binding region; the sequence is YIRCIKPN. IQ domains follow at residues 704–727, 728–749, 750–778, 780–807, and 808–837; these read LEDL…FLLM, KRSQ…RYQQ, IKSS…HQKR, KEAA…EEAR, and RKHA…ANAG. Residues 923–1107 enclose the TH1 domain; the sequence is KALYPSSVGQ…NNRLLEVAVP (185 aa).

It belongs to the TRAFAC class myosin-kinesin ATPase superfamily. Myosin family. In terms of tissue distribution, prominent expression is seen in the brain, lung and liver. It is also expressed in the heart and testis. A high level expression is seen in virtually all neurons (but not glia) in the postnatal and adult mouse brain and in neuroblasts of the cerebellar external granular layer.

Its function is as follows. Motor protein that may participate in process critical to neuronal development and function such as cell migration, neurite outgrowth and vesicular transport. The polypeptide is Unconventional myosin-Ib (Myo1b) (Mus musculus (Mouse)).